Here is a 404-residue protein sequence, read N- to C-terminus: DNA replication and repair protein RecF (404 aa).

Residue 30–37 (GSNGQGKT) coordinates ATP.

It belongs to the RecF family.

It is found in the cytoplasm. Its function is as follows. The RecF protein is involved in DNA metabolism; it is required for DNA replication and normal SOS inducibility. RecF binds preferentially to single-stranded, linear DNA. It also seems to bind ATP. The protein is DNA replication and repair protein RecF of Clavibacter michiganensis subsp. michiganensis (strain NCPPB 382).